Reading from the N-terminus, the 650-residue chain is Probable acyl-CoA dehydrogenase FadE10 (650 aa).

Residues 1–23 (MAQQTQVTEEQARALAEESRESG) form a disordered region. Positions 10–23 (EQARALAEESRESG) are enriched in basic and acidic residues. Glu422 serves as the catalytic Proton acceptor.

It belongs to the acyl-CoA dehydrogenase family. It depends on FAD as a cofactor.

It catalyses the reaction a 2,3-saturated acyl-CoA + A = a 2,3-dehydroacyl-CoA + AH2. This is Probable acyl-CoA dehydrogenase FadE10 (fadE10) from Mycobacterium tuberculosis (strain CDC 1551 / Oshkosh).